A 470-amino-acid polypeptide reads, in one-letter code: Neuraminidase (470 aa).

At 1–6 (MNPNQK) the chain is on the intravirion side. Residues 7 to 27 (IICISATGMTLSVVSLLIGIA) form a helical membrane-spanning segment. Residues 11-33 (SATGMTLSVVSLLIGIANLGLNI) are involved in apical transport and lipid raft association. At 28–470 (NLGLNIGLHY…HDGAEIIYFK (443 aa)) the chain is on the virion surface side. The segment at 36–88 (HYKVGDTPDAPTPNVNGTNSTTTIINNNTQNNFTNITNIVQNKNEERTFLNLT) is hypervariable stalk region. N51, N54, N62, N67, N70, and N86 each carry an N-linked (GlcNAc...) asparagine; by host glycan. A head of neuraminidase region spans residues 91–470 (LCEVNSWHIL…HDGAEIIYFK (380 aa)). 8 disulfides stabilise this stretch: C92–C419, C124–C129, C184–C231, C233–C238, C279–C292, C281–C290, C319–C337, and C423–C449. Residue R118 participates in substrate binding. Residue N146 is glycosylated (N-linked (GlcNAc...) asparagine; by host). D151 functions as the Proton donor/acceptor in the catalytic mechanism. R152 provides a ligand contact to substrate. N201 is a glycosylation site (N-linked (GlcNAc...) asparagine; by host). 277 to 278 (EE) contacts substrate. A substrate-binding site is contributed by R293. Residues D294, G298, and D325 each contribute to the Ca(2+) site. R372 serves as a coordination point for substrate. N402 is a glycosylation site (N-linked (GlcNAc...) asparagine; by host). Y406 serves as the catalytic Nucleophile.

It belongs to the glycosyl hydrolase 34 family. In terms of assembly, homotetramer. It depends on Ca(2+) as a cofactor. N-glycosylated.

The protein localises to the virion membrane. The protein resides in the host apical cell membrane. The catalysed reaction is Hydrolysis of alpha-(2-&gt;3)-, alpha-(2-&gt;6)-, alpha-(2-&gt;8)- glycosidic linkages of terminal sialic acid residues in oligosaccharides, glycoproteins, glycolipids, colominic acid and synthetic substrates.. Its activity is regulated as follows. Inhibited by the neuraminidase inhibitors zanamivir (Relenza) and oseltamivir (Tamiflu). These drugs interfere with the release of progeny virus from infected cells and are effective against all influenza strains. Resistance to neuraminidase inhibitors is quite rare. Catalyzes the removal of terminal sialic acid residues from viral and cellular glycoconjugates. Cleaves off the terminal sialic acids on the glycosylated HA during virus budding to facilitate virus release. Additionally helps virus spread through the circulation by further removing sialic acids from the cell surface. These cleavages prevent self-aggregation and ensure the efficient spread of the progeny virus from cell to cell. Otherwise, infection would be limited to one round of replication. Described as a receptor-destroying enzyme because it cleaves a terminal sialic acid from the cellular receptors. May facilitate viral invasion of the upper airways by cleaving the sialic acid moieties on the mucin of the airway epithelial cells. Likely to plays a role in the budding process through its association with lipid rafts during intracellular transport. May additionally display a raft-association independent effect on budding. Plays a role in the determination of host range restriction on replication and virulence. Sialidase activity in late endosome/lysosome traffic seems to enhance virus replication. The sequence is that of Neuraminidase from Influenza A virus (strain A/Gull/Astrakhan/227/1984 H13N6).